Reading from the N-terminus, the 144-residue chain is Large ribosomal subunit protein uL15 (144 aa).

The tract at residues 1 to 59 is disordered; that stretch reads MELNNLKPAEGAKHAKRRVGRGIGSGLGKTAGRGHKGQKSRSGGFHKVGFEGGQMPLQR. Over residues 21-31 the composition is skewed to gly residues; that stretch reads RGIGSGLGKTA.

Belongs to the universal ribosomal protein uL15 family. In terms of assembly, part of the 50S ribosomal subunit.

Binds to the 23S rRNA. The chain is Large ribosomal subunit protein uL15 from Burkholderia thailandensis (strain ATCC 700388 / DSM 13276 / CCUG 48851 / CIP 106301 / E264).